The following is a 545-amino-acid chain: E3 ubiquitin-protein ligase ipaH9.8 (545 aa).

An interaction with target proteins region spans residues 1–242 (MLPINNNFSL…YHGPRIYFSM (242 aa)). LRR repeat units lie at residues 57 to 77 (NSDE…NLPA), 78 to 99 (QITL…PVTL), 100 to 117 (KKLY…VLPP), 118 to 139 (ALES…PDSL), 140 to 157 (LTMN…SLPQ), 158 to 179 (ALKN…SEGN), 182 to 203 (VVRE…ILNL), and 205 to 228 (NECS…QRLT). The interval 243 to 250 (SDGQQNTL) is linker. The interval 251-545 (HRPLADAVTA…PENGSQLHHS (295 aa)) is E3 ubiquitin-protein ligase catalytic domain. An NEL domain is found at 253–545 (PLADAVTAWF…PENGSQLHHS (293 aa)). The active-site Glycyl thioester intermediate is the Cys337.

This sequence belongs to the LRR-containing bacterial E3 ligase family. As to quaternary structure, also interacts with human and mouse U2AF1 (U2AF35). In terms of processing, autoubiquitinated (in vitro). Ubiquitinated in the presence of host E1 ubiquitin-activating enzyme, E2 ubiquitin-conjugating enzyme and ubiquitin.

The protein resides in the secreted. It is found in the host cytoplasm. The protein localises to the host nucleus. It catalyses the reaction S-ubiquitinyl-[E2 ubiquitin-conjugating enzyme]-L-cysteine + [acceptor protein]-L-lysine = [E2 ubiquitin-conjugating enzyme]-L-cysteine + N(6)-ubiquitinyl-[acceptor protein]-L-lysine.. It participates in protein modification; protein ubiquitination. With respect to regulation, exists in an autoinhibited state in the absence of substrate protein, due to interactions of the leucine-rich repeats with NEL domain. Is activated upon binding to a substrate protein. Effector E3 ubiquitin ligase that interferes with host's ubiquitination pathway and modulates the acute inflammatory responses, thus facilitating bacterial colonization within the host cell. Interacts with IKBKG (NEMO) and TNIP1 (ABIN-1), a ubiquitin-binding adapter protein, which results in TNIP1-dependent 'Lys-27'-linked polyubiquitination of IKBKG. Consequently, polyubiquitinated IKBKG undergoes proteasome-dependent degradation, which perturbs NF-kappa-B activation during bacterial infection. Mediates polyubiquitination of host U2AF1, leading to its proteasomal degradation. Catalyzes 'Lys-48'-linked polyubiquitination and subsequent degradation of a subset of host guanylate-binding proteins (GBP1, GBP2, GBP4 and GBP6), thereby suppressing host cell defense. In contrast, host GBP3 and GBP7 are not ubiquitinated by IpaH9.8. Uses UBE2D2 (UBCH5B) as an E2 ubiquitin-conjugating enzyme. The sequence is that of E3 ubiquitin-protein ligase ipaH9.8 from Shigella flexneri.